A 256-amino-acid chain; its full sequence is Astacin-like metalloprotease toxin 2 (256 aa).

A signal peptide spans 1–24 (MIPDVGFLVLLTGALFICIKAAPA). Residues 25-52 (TTDVDPTFEGRIVMEGDILIREEQLTER) constitute a propeptide that is removed on maturation. One can recognise a Peptidase M12A domain in the interval 53–250 (NAIALENMRW…KKINTLYNCP (198 aa)). Intrachain disulfides connect cysteine 94–cysteine 249 and cysteine 117–cysteine 136. A Zn(2+)-binding site is contributed by histidine 144. Glutamate 145 is an active-site residue. Histidine 148 and histidine 154 together coordinate Zn(2+).

In terms of assembly, monomer. The cofactor is Zn(2+). In terms of tissue distribution, expressed by the venom gland.

The protein localises to the secreted. With respect to regulation, inhibited by 1,10-phenanthroline. Functionally, zinc metalloprotease. Provoques deadhesion of endothelial cells from cell cultures, and also degradation of fibronectin, fibrinogen and gelatin in vitro. Its role in the venom is not fully understood but it might act as a spreading factor that facilitates diffusion of other venom toxins. Alternatively, it might be involved in the proteolytic processing of other venom toxins or it might play a role in extra-oral digestion of prey. This is Astacin-like metalloprotease toxin 2 from Loxosceles intermedia (Brown spider).